Here is a 925-residue protein sequence, read N- to C-terminus: Probable replication restart protein PriA (925 aa).

Zn(2+) contacts are provided by Cys-645, Cys-648, Cys-654, Cys-657, Cys-672, Cys-675, Cys-685, and Cys-688.

It belongs to the helicase family. PriA subfamily. As to quaternary structure, interacts with DnaB (DR_0549). Component of the replication restart primosome. It depends on Zn(2+) as a cofactor.

Initiates the restart of stalled replication forks, which reloads the replicative helicase on sites other than the origin of replication. Recognizes abandoned replication forks and remodels them to uncover a helicase loading site. Promotes assembly of the primosome at these replication forks. Recognizes and binds DNA at stalled replication forks, also binds single-stranded (ss)DNA. This is Probable replication restart protein PriA from Deinococcus radiodurans (strain ATCC 13939 / DSM 20539 / JCM 16871 / CCUG 27074 / LMG 4051 / NBRC 15346 / NCIMB 9279 / VKM B-1422 / R1).